A 411-amino-acid polypeptide reads, in one-letter code: Tyrosine--tRNA ligase (411 aa).

Residue Y34 participates in L-tyrosine binding. A 'HIGH' region motif is present at residues 39 to 48 (CTATSLHIGS). Residues Y171 and Q175 each coordinate L-tyrosine. The 'KMSKS' region signature appears at 231 to 235 (KMGKT). Residue K234 coordinates ATP. Positions 345–411 (ITAFELFHEA…GKKRHILVKI (67 aa)) constitute an S4 RNA-binding domain.

This sequence belongs to the class-I aminoacyl-tRNA synthetase family. TyrS type 1 subfamily. As to quaternary structure, homodimer.

It is found in the cytoplasm. The catalysed reaction is tRNA(Tyr) + L-tyrosine + ATP = L-tyrosyl-tRNA(Tyr) + AMP + diphosphate + H(+). In terms of biological role, catalyzes the attachment of tyrosine to tRNA(Tyr) in a two-step reaction: tyrosine is first activated by ATP to form Tyr-AMP and then transferred to the acceptor end of tRNA(Tyr). The chain is Tyrosine--tRNA ligase from Rickettsia bellii (strain RML369-C).